Reading from the N-terminus, the 89-residue chain is UPF0335 protein RPC_3979 (89 aa).

This sequence belongs to the UPF0335 family.

The chain is UPF0335 protein RPC_3979 from Rhodopseudomonas palustris (strain BisB18).